Consider the following 201-residue polypeptide: Peptide deformylase (201 aa).

Fe cation is bound by residues C92 and H134. Residue E135 is part of the active site. H138 contacts Fe cation.

This sequence belongs to the polypeptide deformylase family. It depends on Fe(2+) as a cofactor.

The catalysed reaction is N-terminal N-formyl-L-methionyl-[peptide] + H2O = N-terminal L-methionyl-[peptide] + formate. Removes the formyl group from the N-terminal Met of newly synthesized proteins. Requires at least a dipeptide for an efficient rate of reaction. N-terminal L-methionine is a prerequisite for activity but the enzyme has broad specificity at other positions. This is Peptide deformylase from Rhodopirellula baltica (strain DSM 10527 / NCIMB 13988 / SH1).